Here is a 512-residue protein sequence, read N- to C-terminus: 2,3-bisphosphoglycerate-independent phosphoglycerate mutase (512 aa).

2 residues coordinate Mn(2+): Asp-14 and Ser-64. The active-site Phosphoserine intermediate is Ser-64. Substrate is bound by residues His-125, 155 to 156 (RD), Arg-187, Arg-193, 259 to 262 (RADR), and Lys-332. Asp-399, His-403, Asp-440, His-441, and His-459 together coordinate Mn(2+).

This sequence belongs to the BPG-independent phosphoglycerate mutase family. Monomer. The cofactor is Mn(2+).

It carries out the reaction (2R)-2-phosphoglycerate = (2R)-3-phosphoglycerate. Its pathway is carbohydrate degradation; glycolysis; pyruvate from D-glyceraldehyde 3-phosphate: step 3/5. Its function is as follows. Catalyzes the interconversion of 2-phosphoglycerate and 3-phosphoglycerate. The chain is 2,3-bisphosphoglycerate-independent phosphoglycerate mutase from Ruthia magnifica subsp. Calyptogena magnifica.